The sequence spans 663 residues: UvrABC system protein B (663 aa).

The region spanning 30-417 is the Helicase ATP-binding domain; sequence EGIKAGKRHQ…TDKMVEQIIR (388 aa). 43–50 contacts ATP; it reads GATGTGKT. The Beta-hairpin motif lies at 96–119; the sequence is YYDYYQPEAYVPSTDTFIEKDASI. The Helicase C-terminal domain maps to 434 to 600; sequence QIDDLLSEIQ…TINKKIHDLI (167 aa). Positions 627–662 constitute a UVR domain; the sequence is QKTIDNIEKEMKQAAKDLDFEKATELRDMLFELKAE.

It belongs to the UvrB family. Forms a heterotetramer with UvrA during the search for lesions. Interacts with UvrC in an incision complex.

The protein resides in the cytoplasm. Its function is as follows. The UvrABC repair system catalyzes the recognition and processing of DNA lesions. A damage recognition complex composed of 2 UvrA and 2 UvrB subunits scans DNA for abnormalities. Upon binding of the UvrA(2)B(2) complex to a putative damaged site, the DNA wraps around one UvrB monomer. DNA wrap is dependent on ATP binding by UvrB and probably causes local melting of the DNA helix, facilitating insertion of UvrB beta-hairpin between the DNA strands. Then UvrB probes one DNA strand for the presence of a lesion. If a lesion is found the UvrA subunits dissociate and the UvrB-DNA preincision complex is formed. This complex is subsequently bound by UvrC and the second UvrB is released. If no lesion is found, the DNA wraps around the other UvrB subunit that will check the other stand for damage. The chain is UvrABC system protein B from Staphylococcus aureus (strain COL).